Here is a 1001-residue protein sequence, read N- to C-terminus: E3 ubiquitin-protein ligase BRE1B (1001 aa).

The tract at residues 1–31 (MSGLGNKRAAGDGGSGPPEKKLSREEKTTTT) is disordered. Positions 18-28 (PEKKLSREEKT) are enriched in basic and acidic residues. Lysine 20 is modified (N6-acetyllysine). The residue at position 42 (serine 42) is a Phosphoserine. Positions 45-91 (EEIDLKVLQFKNKKLAERLEQRQACEDELRERIEKLEKRQATDDATL) form a coiled coil. Positions 116-149 (GELSSAPEAPGTQEGPTCDGTPLPEPGTSELREP) are disordered. Coiled coils occupy residues 228–377 (ARTR…LRSL) and 437–523 (LQKK…AQTS). 2 positions are modified to N6-acetyllysine: lysine 355 and lysine 517. Residues 516–646 (GKLRAQTSGS…EKAKVEEAKR (131 aa)) are disordered. Positions 520-531 (AQTSGSTHSTPN) are enriched in polar residues. At serine 528 the chain carries Phosphoserine. Residues lysine 578 and lysine 579 each participate in a glycyl lysine isopeptide (Lys-Gly) (interchain with G-Cter in SUMO2) cross-link. Serine 585 bears the Phosphoserine mark. Basic and acidic residues-rich tracts occupy residues 602-619 (RGRE…EREG) and 633-646 (RADR…EAKR). A coiled-coil region spans residues 627–946 (VASALSRADR…EEIKEYKARL (320 aa)). The RING-type zinc-finger motif lies at 948 to 987 (CPCCNTRKKDAVLTKCFHVFCFECVRGRYEARQRKCPKCN).

Belongs to the BRE1 family. Component of the RNF20/40 complex (also known as BRE1 complex) probably composed of 2 copies of RNF20/BRE1A and 2 copies of RNF40/BRE1B. Interacts with UBE2E1/UBCH6. Interacts with RB1 and WAC.

The protein resides in the nucleus. It carries out the reaction S-ubiquitinyl-[E2 ubiquitin-conjugating enzyme]-L-cysteine + [acceptor protein]-L-lysine = [E2 ubiquitin-conjugating enzyme]-L-cysteine + N(6)-ubiquitinyl-[acceptor protein]-L-lysine.. It functions in the pathway protein modification; protein ubiquitination. Its function is as follows. Component of the RNF20/40 E3 ubiquitin-protein ligase complex that mediates monoubiquitination of 'Lys-120' of histone H2B (H2BK120ub1). H2BK120ub1 gives a specific tag for epigenetic transcriptional activation and is also prerequisite for histone H3 'Lys-4' and 'Lys-79' methylation (H3K4me and H3K79me, respectively). It thereby plays a central role in histone code and gene regulation. The RNF20/40 complex forms a H2B ubiquitin ligase complex in cooperation with the E2 enzyme UBE2A or UBE2B; reports about the cooperation with UBE2E1/UBCH are contradictory. Required for transcriptional activation of Hox genes. In Macaca fascicularis (Crab-eating macaque), this protein is E3 ubiquitin-protein ligase BRE1B (RNF40).